The sequence spans 156 residues: 6,7-dimethyl-8-ribityllumazine synthase (156 aa).

Residues F23, 57-59 (AFE), and 81-83 (AVI) contribute to the 5-amino-6-(D-ribitylamino)uracil site. 86 to 87 (ST) provides a ligand contact to (2S)-2-hydroxy-3-oxobutyl phosphate. The active-site Proton donor is H89. F114 contacts 5-amino-6-(D-ribitylamino)uracil. R128 serves as a coordination point for (2S)-2-hydroxy-3-oxobutyl phosphate.

Belongs to the DMRL synthase family.

The enzyme catalyses (2S)-2-hydroxy-3-oxobutyl phosphate + 5-amino-6-(D-ribitylamino)uracil = 6,7-dimethyl-8-(1-D-ribityl)lumazine + phosphate + 2 H2O + H(+). It participates in cofactor biosynthesis; riboflavin biosynthesis; riboflavin from 2-hydroxy-3-oxobutyl phosphate and 5-amino-6-(D-ribitylamino)uracil: step 1/2. Its function is as follows. Catalyzes the formation of 6,7-dimethyl-8-ribityllumazine by condensation of 5-amino-6-(D-ribitylamino)uracil with 3,4-dihydroxy-2-butanone 4-phosphate. This is the penultimate step in the biosynthesis of riboflavin. This Sulfurospirillum multivorans (Dehalospirillum multivorans) protein is 6,7-dimethyl-8-ribityllumazine synthase.